The chain runs to 270 residues: uncharacterized protein (270 aa).

Its function is as follows. Possibly involved in pGI2 replication mechanism. This is an uncharacterized protein from Bacillus thuringiensis.